The chain runs to 333 residues: Threonine-phosphate decarboxylase (333 aa).

Lysine 199 bears the N6-(pyridoxal phosphate)lysine mark.

The protein belongs to the class-I pyridoxal-phosphate-dependent aminotransferase family. As to quaternary structure, homodimer. Pyridoxal 5'-phosphate is required as a cofactor.

It is found in the cytoplasm. The enzyme catalyses O-phospho-L-threonine + H(+) = (R)-1-aminopropan-2-yl phosphate + CO2. Its pathway is cofactor biosynthesis; adenosylcobalamin biosynthesis. Functionally, decarboxylates L-threonine-O-3-phosphate to yield (R)-1-amino-2-propanol O-2-phosphate, the precursor for the linkage between the nucleotide loop and the corrin ring in cobalamin. The protein is Threonine-phosphate decarboxylase (cobC) of Sinorhizobium sp.